The primary structure comprises 182 residues: Early nodulin-like protein 10 (182 aa).

The first 20 residues, 1 to 20 (MSSVMMCCCLLLLFGLLSEG), serve as a signal peptide directing secretion. The Phytocyanin domain maps to 21-125 (REILVGGKSN…GEKLRVVVLS (105 aa)). N-linked (GlcNAc...) asparagine glycosylation is present at Asn-65. Cys-79 and Cys-113 are joined by a disulfide. N-linked (GlcNAc...) asparagine glycosylation is found at Asn-129 and Asn-148. Asn-157 carries GPI-anchor amidated asparagine lipidation. Residues 158–182 (AHIMNKGSLNTAWSLLLLLPLGLLV) constitute a propeptide, removed in mature form.

The protein belongs to the early nodulin-like (ENODL) family. Mostly expressed in flowers, and, to a lower extent, in leaves, but barely in seedlings, stems, seeds and roots.

It localises to the cell membrane. May act as a carbohydrate transporter. The polypeptide is Early nodulin-like protein 10 (Arabidopsis thaliana (Mouse-ear cress)).